A 227-amino-acid chain; its full sequence is Endolytic peptidoglycan transglycosylase RlpA (227 aa).

The N-terminal stretch at 1-21 (MMNHKFVLLILLIFYCFFLSG) is a signal peptide. Cys-22 is lipidated: N-palmitoyl cysteine. A lipid anchor (S-diacylglycerol cysteine) is attached at Cys-22.

It belongs to the RlpA family.

It localises to the cell membrane. Its function is as follows. Lytic transglycosylase with a strong preference for naked glycan strands that lack stem peptides. In Rickettsia bellii (strain RML369-C), this protein is Endolytic peptidoglycan transglycosylase RlpA.